The chain runs to 193 residues: Secreted RxLR effector protein 126 (193 aa).

The first 20 residues, 1 to 20 (MRYLLAVLIAAAFVISSGTS), serve as a signal peptide directing secretion. The RxLR-dEER motif lies at 50 to 64 (RMLQTKAVNGLEEER).

The protein belongs to the RxLR effector family.

It localises to the secreted. It is found in the host membrane. In terms of biological role, secreted effector that completely suppresses the host cell death induced by cell death-inducing proteins. In Plasmopara viticola (Downy mildew of grapevine), this protein is Secreted RxLR effector protein 126.